We begin with the raw amino-acid sequence, 409 residues long: Lissencephaly-1 homolog (409 aa).

One can recognise a LisH domain in the interval 7–39 (QKEELNKAIADYLHQCGFEDTLNAFKQDANMPG). Residues 54 to 80 (TSVIRLQKKVMDLETRLSEAEKEVHHG) adopt a coiled-coil conformation. Positions 72–95 (EAEKEVHHGGGPKKTRSPEDWIPR) are disordered. 7 WD repeats span residues 104–145 (GHRS…RTLK), 146–187 (GHTD…RTLH), 188–229 (GHDH…KTFQ), 231–269 (HGEW…CKCD), 272–332 (DHDH…CLVT), 335–374 (GHDN…CAKT), and 377–409 (AHEH…WECR).

The protein belongs to the WD repeat LIS1/nudF family.

The protein resides in the cytoplasm. Its subcellular location is the cytoskeleton. The protein localises to the microtubule organizing center. It is found in the centrosome. Its function is as follows. Positively regulates the activity of the minus-end directed microtubule motor protein dynein. May enhance dynein-mediated microtubule sliding by targeting dynein to the microtubule plus end. Required for several dynein- and microtubule-dependent processes. This chain is Lissencephaly-1 homolog, found in Nematostella vectensis (Starlet sea anemone).